A 36-amino-acid polypeptide reads, in one-letter code: Kappa-actitoxin-Avd6a (36 aa).

Positions 2-36 (CKDNFAAATCKHVKENKNCGSQKYATNCAKTCGKC) constitute a ShKT domain. Disulfide bonds link cysteine 2/cysteine 36, cysteine 11/cysteine 29, and cysteine 20/cysteine 33. Positions 24–25 (KY) are crucial for binding to potassium channels.

Belongs to the sea anemone type 1 potassium channel toxin family. Type 1b subfamily.

Its subcellular location is the secreted. The protein resides in the nematocyst. Functionally, blocks voltage-gated potassium channels Kv1.2/KCNA2 (IC(50)=140 nM). The polypeptide is Kappa-actitoxin-Avd6a (Anemonia sulcata (Mediterranean snakelocks sea anemone)).